Consider the following 354-residue polypeptide: Histidinol-phosphate aminotransferase (354 aa).

K210 bears the N6-(pyridoxal phosphate)lysine mark.

Belongs to the class-II pyridoxal-phosphate-dependent aminotransferase family. Histidinol-phosphate aminotransferase subfamily. As to quaternary structure, homodimer. It depends on pyridoxal 5'-phosphate as a cofactor.

The catalysed reaction is L-histidinol phosphate + 2-oxoglutarate = 3-(imidazol-4-yl)-2-oxopropyl phosphate + L-glutamate. The protein operates within amino-acid biosynthesis; L-histidine biosynthesis; L-histidine from 5-phospho-alpha-D-ribose 1-diphosphate: step 7/9. In Clostridium botulinum (strain 657 / Type Ba4), this protein is Histidinol-phosphate aminotransferase.